Here is a 216-residue protein sequence, read N- to C-terminus: Pyrophosphatase PpaX (216 aa).

The active-site Nucleophile is the aspartate 9.

It belongs to the HAD-like hydrolase superfamily. PpaX family. Mg(2+) serves as cofactor.

It carries out the reaction diphosphate + H2O = 2 phosphate + H(+). Hydrolyzes pyrophosphate formed during P-Ser-HPr dephosphorylation by HPrK/P. Might play a role in controlling the intracellular pyrophosphate pool. The sequence is that of Pyrophosphatase PpaX from Bacillus cereus (strain B4264).